The sequence spans 299 residues: Protein bem46 (299 aa).

Residues 15-32 (YSGMASLAVTLIALGFLY) form a helical membrane-spanning segment.

The protein belongs to the serine esterase family.

The protein resides in the membrane. Its function is as follows. Suppressor of bem1/bud5. This is Protein bem46 (bem46) from Schizosaccharomyces pombe (strain 972 / ATCC 24843) (Fission yeast).